The primary structure comprises 910 residues: DNA mismatch repair protein MutS (910 aa).

A compositionally biased stretch (basic and acidic residues) spans 1-11 (MEAKVEEKEPE). The segment at 1–21 (MEAKVEEKEPEPVENAGPDAP) is disordered. 658–665 (GPNMGGKS) lines the ATP pocket.

The protein belongs to the DNA mismatch repair MutS family.

Functionally, this protein is involved in the repair of mismatches in DNA. It is possible that it carries out the mismatch recognition step. This protein has a weak ATPase activity. This chain is DNA mismatch repair protein MutS, found in Brucella melitensis biotype 1 (strain ATCC 23456 / CCUG 17765 / NCTC 10094 / 16M).